The chain runs to 59 residues: Cecropin-C type 1 (59 aa).

The first 23 residues, 1–23 (MNFTKIFVLIAMAALLLVGQSEA), serve as a signal peptide directing secretion.

The protein localises to the secreted. In terms of biological role, cecropins have lytic and antibacterial activity against several Gram-positive and Gram-negative bacteria. The polypeptide is Cecropin-C type 1 (CECC1) (Aedes albopictus (Asian tiger mosquito)).